A 596-amino-acid polypeptide reads, in one-letter code: Cell adhesion molecule CEACAM20 (596 aa).

The signal sequence occupies residues 1–30 (MGPADSWGHHWMGILLSASLCTVWSPPAAA). At 31 to 450 (QLTLNANPLD…SSLSSGAIAG (420 aa)) the chain is on the extracellular side. 4 Ig-like C2-type domains span residues 58–154 (PQIH…PIFL), 160–246 (PDPV…GTLK), 256–341 (PQVV…LELT), and 346–432 (PDQV…TSVL). Cysteines 90 and 138 form a disulfide. N-linked (GlcNAc...) asparagine glycosylation is found at Asn96 and Asn105. Cysteines 276 and 324 form a disulfide. 5 N-linked (GlcNAc...) asparagine glycosylation sites follow: Asn280, Asn306, Asn317, Asn368, and Asn415. A disulfide bridge links Cys375 with Cys416. A helical membrane pass occupies residues 451 to 471 (IVIGILAVIAVASELGYFLCI). The Cytoplasmic portion of the chain corresponds to 472 to 585 (RNARRPSRKT…SIYEELVNPE (114 aa)). 2 disordered regions span residues 477–510 (PSRK…LSPE) and 527–563 (QPPD…LMPP). A compositionally biased stretch (low complexity) spans 501 to 510 (EPSSESLSPE). The span at 553-562 (WKPPPKPLMP) shows a compositional bias: pro residues. Phosphotyrosine is present on residues Tyr578 and Tyr589.

The protein belongs to the immunoglobulin superfamily. CEA family. Interacts (via extracellular domain) with PTPRH (via extracellular domain); the interaction dephosphorylates CEACAM20. Interacts (phosphorylated form) with SYK (via SH2 domains); the interaction further enhances CEACAM20 phosphorylation. Post-translationally, phosphorylated on tyrosine residues by SYK, SRC and FYN in vitro.

Its subcellular location is the cell projection. The protein resides in the microvillus membrane. It is found in the apical cell membrane. In terms of biological role, together with the tyrosine-protein kinase SYK, enhances production of the cytokine CXCL8/IL-8 via the NFKB pathway and may thus have a role in the intestinal immune response. In Homo sapiens (Human), this protein is Cell adhesion molecule CEACAM20.